Consider the following 321-residue polypeptide: Torsin-2A (321 aa).

The signal sequence occupies residues Met-1–Ala-26. Residue Gly-93–Ser-100 participates in ATP binding. An N-linked (GlcNAc...) asparagine glycan is attached at Asn-149.

It belongs to the ClpA/ClpB family. Torsin subfamily. In terms of assembly, homohexamer. Interacts with TOR1AIP1.

The protein localises to the endoplasmic reticulum lumen. In Bos taurus (Bovine), this protein is Torsin-2A (TOR2A).